The sequence spans 520 residues: Cobyric acid synthase (520 aa).

The 195-residue stretch at 257-451 (WLTVAAVRLP…VHGLLESDGF (195 aa)) folds into the GATase cobBQ-type domain. The active-site Nucleophile is C338. H443 is a catalytic residue.

This sequence belongs to the CobB/CobQ family. CobQ subfamily.

It participates in cofactor biosynthesis; adenosylcobalamin biosynthesis. In terms of biological role, catalyzes amidations at positions B, D, E, and G on adenosylcobyrinic A,C-diamide. NH(2) groups are provided by glutamine, and one molecule of ATP is hydrogenolyzed for each amidation. This Nocardia farcinica (strain IFM 10152) protein is Cobyric acid synthase.